The following is a 152-amino-acid chain: Large ribosomal subunit protein bL9 (152 aa).

The protein belongs to the bacterial ribosomal protein bL9 family.

Binds to the 23S rRNA. The polypeptide is Large ribosomal subunit protein bL9 (Coxiella burnetii (strain Dugway 5J108-111)).